The chain runs to 236 residues: CHD1 helical C-terminal domain containing protein 1 (236 aa).

Residues 1-29 (MEASDWQGGEGDKPLEKVGSVPCLERSSS) form a disordered region. Positions 44–145 (LSQDTFKICK…TNQTAKFLAA (102 aa)) are CHD1 helical C-terminal domain (CHCT). The tract at residues 197-236 (LEEPRSSHCSRGDSLRKLPQKPKLKKKRIKERLESPKSCS) is disordered. Basic and acidic residues predominate over residues 198–212 (EEPRSSHCSRGDSLR). Positions 214 to 226 (LPQKPKLKKKRIK) are enriched in basic residues. The segment covering 227–236 (ERLESPKSCS) has biased composition (basic and acidic residues).

Exclusively expressed in testes.

The protein localises to the cytoplasm. Its subcellular location is the nucleus. Its function is as follows. May play a role in regulation of apoptosis. The polypeptide is CHD1 helical C-terminal domain containing protein 1 (Chct1) (Mus musculus (Mouse)).